Consider the following 164-residue polypeptide: Peptidyl-prolyl cis-trans isomerase A-like 4D (164 aa).

In terms of domain architecture, PPIase cyclophilin-type spans 7–163 (FFEITRDGKP…KKITIADCGQ (157 aa)).

The protein belongs to the cyclophilin-type PPIase family. PPIase A subfamily.

The protein resides in the cytoplasm. It carries out the reaction [protein]-peptidylproline (omega=180) = [protein]-peptidylproline (omega=0). Its function is as follows. PPIases accelerate the folding of proteins. It catalyzes the cis-trans isomerization of proline imidic peptide bonds in oligopeptides. The polypeptide is Peptidyl-prolyl cis-trans isomerase A-like 4D (Homo sapiens (Human)).